A 169-amino-acid chain; its full sequence is Protein ORFb in retron Ec67 (169 aa).

This is Protein ORFb in retron Ec67 from Escherichia coli.